Consider the following 117-residue polypeptide: UPF0102 protein YE3728 (117 aa).

This sequence belongs to the UPF0102 family.

The chain is UPF0102 protein YE3728 from Yersinia enterocolitica serotype O:8 / biotype 1B (strain NCTC 13174 / 8081).